The following is a 49-amino-acid chain: Large ribosomal subunit protein bL33 (49 aa).

It belongs to the bacterial ribosomal protein bL33 family.

In Desulforudis audaxviator (strain MP104C), this protein is Large ribosomal subunit protein bL33.